The primary structure comprises 253 residues: Coenzyme F420:L-glutamate ligase (253 aa).

GTP-binding positions include 9–12 (LPEI), 38–39 (ST), and Lys43. Asp113 contributes to the a divalent metal cation binding site. Residue Asn116 participates in GTP binding. A divalent metal cation is bound by residues Asp148, Thr149, and Glu206. Position 204–211 (204–211 (AGEGDDGT)) interacts with GTP.

The protein belongs to the CofE family. As to quaternary structure, homodimer. Requires Mg(2+) as cofactor. Mn(2+) is required as a cofactor. The cofactor is K(+).

The enzyme catalyses oxidized coenzyme F420-0 + GTP + L-glutamate = oxidized coenzyme F420-1 + GDP + phosphate + H(+). The catalysed reaction is oxidized coenzyme F420-1 + GTP + L-glutamate = oxidized coenzyme F420-2 + GDP + phosphate + H(+). The protein operates within cofactor biosynthesis; coenzyme F420 biosynthesis. Its function is as follows. Catalyzes the GTP-dependent successive addition of two or more gamma-linked L-glutamates to the L-lactyl phosphodiester of 7,8-didemethyl-8-hydroxy-5-deazariboflavin (F420-0) to form coenzyme F420-0-glutamyl-glutamate (F420-2) or polyglutamated F420 derivatives. This is Coenzyme F420:L-glutamate ligase from Natronomonas pharaonis (strain ATCC 35678 / DSM 2160 / CIP 103997 / JCM 8858 / NBRC 14720 / NCIMB 2260 / Gabara) (Halobacterium pharaonis).